A 243-amino-acid chain; its full sequence is Probable ubiquitin-conjugating enzyme E2 33 (243 aa).

The region spanning 5–162 (ACIKRLQKEY…FPEYVEKYSQ (158 aa)) is the UBC core domain. Cys87 acts as the Glycyl thioester intermediate in catalysis. A disordered region spans residues 168–197 (EEAATQQTTTSENQDFPQKDNAKVESEKSV). The span at 184–197 (PQKDNAKVESEKSV) shows a compositional bias: basic and acidic residues. Residues 220–240 (LPGWIVLLLVSIVGVVMALPL) traverse the membrane as a helical segment.

Belongs to the ubiquitin-conjugating enzyme family.

The protein resides in the membrane. The enzyme catalyses S-ubiquitinyl-[E1 ubiquitin-activating enzyme]-L-cysteine + [E2 ubiquitin-conjugating enzyme]-L-cysteine = [E1 ubiquitin-activating enzyme]-L-cysteine + S-ubiquitinyl-[E2 ubiquitin-conjugating enzyme]-L-cysteine.. The protein operates within protein modification; protein ubiquitination. In terms of biological role, accepts the ubiquitin from the E1 complex and catalyzes its covalent attachment to other proteins. The protein is Probable ubiquitin-conjugating enzyme E2 33 (UBC33) of Arabidopsis thaliana (Mouse-ear cress).